A 517-amino-acid polypeptide reads, in one-letter code: Bifunctional purine biosynthesis protein PurH (517 aa).

In terms of domain architecture, MGS-like spans 1 to 151 (MTQERKIKRA…KNFAHVAVLC (151 aa)).

It belongs to the PurH family.

The enzyme catalyses (6R)-10-formyltetrahydrofolate + 5-amino-1-(5-phospho-beta-D-ribosyl)imidazole-4-carboxamide = 5-formamido-1-(5-phospho-D-ribosyl)imidazole-4-carboxamide + (6S)-5,6,7,8-tetrahydrofolate. It carries out the reaction IMP + H2O = 5-formamido-1-(5-phospho-D-ribosyl)imidazole-4-carboxamide. It participates in purine metabolism; IMP biosynthesis via de novo pathway; 5-formamido-1-(5-phospho-D-ribosyl)imidazole-4-carboxamide from 5-amino-1-(5-phospho-D-ribosyl)imidazole-4-carboxamide (10-formyl THF route): step 1/1. Its pathway is purine metabolism; IMP biosynthesis via de novo pathway; IMP from 5-formamido-1-(5-phospho-D-ribosyl)imidazole-4-carboxamide: step 1/1. This chain is Bifunctional purine biosynthesis protein PurH, found in Elusimicrobium minutum (strain Pei191).